Here is a 154-residue protein sequence, read N- to C-terminus: Endoribonuclease YbeY (154 aa).

Zn(2+)-binding residues include histidine 120, histidine 124, and histidine 130.

It belongs to the endoribonuclease YbeY family. Zn(2+) is required as a cofactor.

The protein localises to the cytoplasm. Its function is as follows. Single strand-specific metallo-endoribonuclease involved in late-stage 70S ribosome quality control and in maturation of the 3' terminus of the 16S rRNA. The chain is Endoribonuclease YbeY from Leptospira biflexa serovar Patoc (strain Patoc 1 / Ames).